Consider the following 182-residue polypeptide: Vomeronasal secretory protein 1 (182 aa).

The signal sequence occupies residues 1–18 (MRALLLIISFCLVAVLQA). A glycan (N-linked (GlcNAc...) asparagine) is linked at Asn30. A disulfide bridge connects residues Cys76 and Cys168.

This sequence belongs to the calycin superfamily. Lipocalin family. Specifically expressed in vomeronasal and posterior glands of the nasal septum, the ducts of which open into the lumen of the vomeronasal organ.

Its subcellular location is the secreted. Transport of lipophilic molecules, possible pheromone-carrier. The protein is Vomeronasal secretory protein 1 (Lcn3) of Mus musculus (Mouse).